We begin with the raw amino-acid sequence, 459 residues long: MVEKLWGGRFEASLDKQTEEFGASIKFEQRLAPFDLKGSLAHVKMLGETGIITTEESKKIAEGLKKVEEKLLNGQIEFKMENEDIHMNMESYLHQEIGPLAGKLHTARSRNDQVVTDMHLYLKSILEAVLEALKVLRETIVKLAVNQIDTIMPGYTHLQHAQPISFGQHLMAYYQMLTRDFERFEFNVKHTDMNPLGAAALAGTTFPIDRMLTTKLLGFEKAYDNSMDAVSDRDFILEFLSNASLLMMHLSRFCEELLLWSSHEFKFVSLSDTYSTGSSIMPQKKNPDMAELIRGKTGRVYGNLTALLTVMKGLPLAYNKDFQEDKEGMFDSADTIITSLTVMNGMLSTLTVNRVNMEKSTEQDFSNATELADYLATKGLPFRKAHELVGLLVLDCIKKGIYLQDVNLQDYQMLSPLINEDVYEVLKSRTAVSRRNSLGGTGFESVKKQIEEAKKELQI.

It belongs to the lyase 1 family. Argininosuccinate lyase subfamily.

The protein localises to the cytoplasm. It carries out the reaction 2-(N(omega)-L-arginino)succinate = fumarate + L-arginine. The protein operates within amino-acid biosynthesis; L-arginine biosynthesis; L-arginine from L-ornithine and carbamoyl phosphate: step 3/3. This is Argininosuccinate lyase from Lactococcus lactis subsp. lactis (strain IL1403) (Streptococcus lactis).